The sequence spans 213 residues: Penicillin-binding protein activator LpoB (213 aa).

An N-terminal signal peptide occupies residues 1–19 (MMKMNRYALVAALAIFLSG). Cys20 carries the N-palmitoyl cysteine lipid modification. Cys20 carries the S-diacylglycerol cysteine lipid modification. Positions 26–71 (PAPVDEVKPAPEQPAEPQQPVPVVPSVPTIPQQPGPIEHEDQTAQP) are disordered. The segment covering 36-50 (PEQPAEPQQPVPVVP) has biased composition (pro residues).

Belongs to the LpoB family. In terms of assembly, interacts with PBP1b.

Its subcellular location is the cell outer membrane. Regulator of peptidoglycan synthesis that is essential for the function of penicillin-binding protein 1B (PBP1b). This is Penicillin-binding protein activator LpoB from Citrobacter koseri (strain ATCC BAA-895 / CDC 4225-83 / SGSC4696).